A 491-amino-acid chain; its full sequence is Glucose-6-phosphate 1-dehydrogenase (491 aa).

NADP(+) is bound by residues Arg-50, 92–93 (DV), and Lys-147. Residues His-177, Lys-181, Glu-215, and Asp-234 each coordinate substrate. His-239 acts as the Proton acceptor in catalysis. 2 residues coordinate substrate: Lys-339 and Lys-344.

It belongs to the glucose-6-phosphate dehydrogenase family.

It carries out the reaction D-glucose 6-phosphate + NADP(+) = 6-phospho-D-glucono-1,5-lactone + NADPH + H(+). It functions in the pathway carbohydrate degradation; pentose phosphate pathway; D-ribulose 5-phosphate from D-glucose 6-phosphate (oxidative stage): step 1/3. Functionally, catalyzes the oxidation of glucose 6-phosphate to 6-phosphogluconolactone. This Dickeya dadantii (strain 3937) (Erwinia chrysanthemi (strain 3937)) protein is Glucose-6-phosphate 1-dehydrogenase.